A 361-amino-acid chain; its full sequence is Diacylglycerol O-acyltransferase 2 (361 aa).

Residues 1 to 42 (MKTIIAAYSGVLRGTGSSLLSAVHDLPNIPWLSKSSVVRHLQ) lie on the Cytoplasmic side of the membrane. Residues 43-61 (IISVLQWVLSFLILGVACT) form a helical membrane-spanning segment. At 62-65 (AVLV) the chain is on the lumenal side. Residues 66 to 85 (YIFCTDLWLIAALYLTWMVL) form a helical membrane-spanning segment. Topologically, residues 86-361 (DWNTPYKGGR…LHDSEMLEIV (276 aa)) are cytoplasmic.

It belongs to the diacylglycerol acyltransferase family.

The protein localises to the endoplasmic reticulum membrane. It is found in the lipid droplet. The protein resides in the cytoplasm. Its subcellular location is the perinuclear region. It carries out the reaction an acyl-CoA + a 1,2-diacyl-sn-glycerol = a triacyl-sn-glycerol + CoA. The enzyme catalyses all-trans-retinol + an acyl-CoA = an all-trans-retinyl ester + CoA. It catalyses the reaction 2-(9Z-octadecenoyl)-glycerol + (9Z)-octadecenoyl-CoA = 1,2-di-(9Z-octadecenoyl)-sn-glycerol + CoA. The catalysed reaction is 1,2-di-(9Z-octadecenoyl)-sn-glycerol + (9Z)-octadecenoyl-CoA = 1,2,3-tri-(9Z-octadecenoyl)-glycerol + CoA. It carries out the reaction all-trans-retinol + hexadecanoyl-CoA = all-trans-retinyl hexadecanoate + CoA. The enzyme catalyses 1-O-(9Z-octadecenyl)-glycerol + (9Z)-octadecenoyl-CoA = 1-O-(9Z-octadecyl)-3-(9Z-octadecenoyl)-glycerol + CoA. It catalyses the reaction 1-(9Z-octadecenoyl)-glycerol + (9Z)-octadecenoyl-CoA = 1,2-di-(9Z-octadecenoyl)-glycerol + CoA. The catalysed reaction is 1,2-di-(9Z-octadecenoyl)-sn-glycerol + hexadecanoyl-CoA = 1,2-di-(9Z)-octadecenoyl-3-hexadecanoyl-sn-glycerol + CoA. It carries out the reaction 1,3-di-(9Z-octadecenoyl)-glycerol + (9Z)-octadecenoyl-CoA = 1,2,3-tri-(9Z-octadecenoyl)-glycerol + CoA. The enzyme catalyses 2,3-di-(9Z)-octadecenoyl-sn-glycerol + (9Z)-octadecenoyl-CoA = 1,2,3-tri-(9Z-octadecenoyl)-glycerol + CoA. It catalyses the reaction 2-(9Z-octadecenoyl)-glycerol + hexadecanoyl-CoA = 1-hexadecanoyl-2-(9Z-octadecenoyl)-sn-glycerol + CoA. Its pathway is glycerolipid metabolism; triacylglycerol biosynthesis. Its function is as follows. Essential acyltransferase that catalyzes the terminal and only committed step in triacylglycerol synthesis by using diacylglycerol and fatty acyl CoA as substrates. Required for synthesis and storage of intracellular triglycerides. Probably plays a central role in cytosolic lipid accumulation. The sequence is that of Diacylglycerol O-acyltransferase 2 (dgat2) from Xenopus tropicalis (Western clawed frog).